The following is a 548-amino-acid chain: Sesquiterpene synthase 12 (548 aa).

Mg(2+) is bound by residues Asp-299, Asp-303, Asp-444, and Glu-452. Residues 299-303 (DDTFD) carry the DDXXD motif motif.

Belongs to the terpene synthase family. Tpsa subfamily. It depends on Mg(2+) as a cofactor. Mn(2+) serves as cofactor. In terms of tissue distribution, mostly expressed in leaves, to a lower extent in stems, trichomes, flowers and roots and, at low levels, in fruits.

It catalyses the reaction (2E,6E)-farnesyl diphosphate = alpha-humulene + diphosphate. The catalysed reaction is (2E,6E)-farnesyl diphosphate = (-)-(E)-beta-caryophyllene + diphosphate. The enzyme catalyses (2Z,6Z)-farnesyl diphosphate = beta-bisabolene + diphosphate. It carries out the reaction (2E)-geranyl diphosphate = terpinolene + diphosphate. It catalyses the reaction (2E)-geranyl diphosphate = limonene + diphosphate. The catalysed reaction is (2E)-geranyl diphosphate = beta-myrcene + diphosphate. The enzyme catalyses (2E)-geranyl diphosphate = (E)-beta-ocimene + diphosphate. It carries out the reaction (2Z,6Z)-farnesyl diphosphate = gamma-curcumene + diphosphate. It catalyses the reaction (2Z,6Z)-farnesyl diphosphate = (Z)-gamma-bisabolene + diphosphate. Its pathway is secondary metabolite biosynthesis; terpenoid biosynthesis. Its function is as follows. Sesquiterpene synthase involved in the biosynthesis of volatile compounds. Mediates the conversion of (2E,6E)-farnesyl diphosphate (FPP) into (1E,4E,8E)-alpha-humulene and (-)-(E)-beta-caryophyllene, and of (2Z,6Z)-farnesyl diphosphate ((ZZ)-FPP) into beta-bisabolene, gamma-curcumene and (Z)-gamma-bisabolene. Can act with a low efficiency as a monoterpene synthase with geranyl diphosphate (GPP) as substrate, thus producing beta-myrcene, (E)-beta-ocimene, limonene and terpinolene. The chain is Sesquiterpene synthase 12 from Solanum lycopersicum (Tomato).